The following is a 371-amino-acid chain: Probable G protein-coupled receptor 85 (371 aa).

The Extracellular portion of the chain corresponds to 1 to 26 (MANYSHAGDHNILQNVSPLATFLKLT). Asparagine 3 carries N-linked (GlcNAc...) asparagine glycosylation. A helical membrane pass occupies residues 27–47 (SLGFIIGVGVVGNLLISILLV). At 48 to 58 (KDKSLHRAPYY) the chain is on the cytoplasmic side. The helical transmembrane segment at 59 to 79 (FLLDLCASDILRSAICFPFVF) threads the bilayer. Over 80 to 96 (TSVKNGSAWTYGTLTCK) the chain is Extracellular. Asparagine 84 is a glycosylation site (N-linked (GlcNAc...) asparagine). The cysteines at positions 95 and 173 are disulfide-linked. The chain crosses the membrane as a helical span at residues 97 to 117 (VIAFLGVLSCFHTAFMLFCVS). The Cytoplasmic segment spans residues 118 to 138 (VTRYLAIAHHRFYTKRLTFWT). A helical transmembrane segment spans residues 139 to 159 (CLAVICMVWTLSVAMAFPPVL). Topologically, residues 160-189 (DVGTYSFIREEDQCTFQHRSFRANDSLGFM) are extracellular. N-linked (GlcNAc...) asparagine glycosylation occurs at asparagine 183. The helical transmembrane segment at 190–210 (LLLALILLATQLVYLKLIFFV) threads the bilayer. Residues 211-287 (HDRRKMKPVQ…FKTEKRISRM (77 aa)) are Cytoplasmic-facing. Residues 288–308 (FYIITFFFLSLWGPYLVACYW) form a helical membrane-spanning segment. The Extracellular segment spans residues 309-321 (RVFARGPVIPGGY). The helical transmembrane segment at 322–342 (LTAAVWMSFAQAGVNPFICIF) threads the bilayer. The Cytoplasmic portion of the chain corresponds to 343–371 (SNRELRRCFSTTLLYCRKSRLPREPYCVI).

This sequence belongs to the G-protein coupled receptor 1 family.

It is found in the cell membrane. In terms of biological role, orphan receptor. The chain is Probable G protein-coupled receptor 85 (gpr85) from Danio rerio (Zebrafish).